Consider the following 542-residue polypeptide: Chaperonin GroEL (542 aa).

Residues 29 to 32 (TLGP), 86 to 90 (DGTTT), glycine 413, and aspartate 492 contribute to the ATP site.

The protein belongs to the chaperonin (HSP60) family. Forms a cylinder of 14 subunits composed of two heptameric rings stacked back-to-back. Interacts with the co-chaperonin GroES.

It localises to the cytoplasm. It catalyses the reaction ATP + H2O + a folded polypeptide = ADP + phosphate + an unfolded polypeptide.. Together with its co-chaperonin GroES, plays an essential role in assisting protein folding. The GroEL-GroES system forms a nano-cage that allows encapsulation of the non-native substrate proteins and provides a physical environment optimized to promote and accelerate protein folding. This is Chaperonin GroEL from Nocardia asteroides.